The primary structure comprises 1043 residues: Unconventional myosin-Ia (1043 aa).

Residues 8 to 694 (VGVEDLVLLE…TLFYLEEQRR (687 aa)) form the Myosin motor domain. Residue 101–108 (GESGSGKT) participates in ATP binding. The segment at 571-593 (VAILMKNLYSKSPNYIRCIKPNE) is actin-binding. IQ domains follow at residues 697 to 719 (LQQLATLIQKIYRGWRCRTHYQL), 720 to 742 (MRKSQILISSWFRGNMQKKCYGK), and 743 to 772 (IKASVLLIQAFVRGWKARKNYRKYFRSEAA). The region spanning 858 to 1042 (KASYPQSVPI…KGSHCLEVTV (185 aa)) is the TH1 domain.

It belongs to the TRAFAC class myosin-kinesin ATPase superfamily. Myosin family. Post-translationally, phosphorylated by ALPK1.

Involved in directing the movement of organelles along actin filaments. In Homo sapiens (Human), this protein is Unconventional myosin-Ia (MYO1A).